Consider the following 258-residue polypeptide: Thrombin-like enzyme saxthrombin (258 aa).

Positions 1-18 are cleaved as a signal peptide; the sequence is MVLIRVLANLLILQLSYA. Positions 19-24 are excised as a propeptide; the sequence is QKSSEL. The 225-residue stretch at 25–249 folds into the Peptidase S1 domain; the sequence is VIGGDECNIN…YNHWIQSIIA (225 aa). 6 cysteine pairs are disulfide-bonded: C31–C163, C50–C66, C98–C256, C142–C210, C174–C189, and C200–C225. Residue N44 is glycosylated (N-linked (GlcNAc...) asparagine). Residues H65 and D110 each act as charge relay system in the active site. Catalysis depends on S204, which acts as the Charge relay system. An N-linked (GlcNAc...) asparagine glycan is attached at N251.

The protein belongs to the peptidase S1 family. Snake venom subfamily. In terms of assembly, monomer. In terms of tissue distribution, expressed by the venom gland.

The protein localises to the secreted. In terms of biological role, thrombin-like snake venom serine protease that shows strong blood coagulation activity in vitro. The chain is Thrombin-like enzyme saxthrombin from Gloydius intermedius (Central Asian pit viper).